The primary structure comprises 442 residues: MREIVHIQGGQCGNQIGAKFWEVISDEHGIDPTGTYHGDSDLQLERINVYYNEATGGRYVPRAILMDLEPGTMDSVRAGPFGQLFRPDNFVFGQTGAGNNWAKGHYTEGAELIDSVLDVVRKEAEGCDCLQGFQITHSLGGGTGSGMGTLLISKVREEYPDRIMETFSVVPSPKVSDTVVEPYNATLSVHQLVENADECMVIDNEALYDICFRTLKLTTPTYGDLNHLVSAAMSGVTCCLRFPGQLNSDLRKLAVNLIPFPRLHFFMIGFAPLTSRGSQQYRALTVPELTQQMFDAKNMMCAADPRHGRYLTASALFRGRMSTKEVDEQMLNVQNKNSSYFVEWIPNNIKSSICDIPPKGLKMAVTFVGNSTAIQEMFKRVAEQFTAMFRRKAFLHWYTGEGMDEMEFTEAESNMNDLVSEYQQYQDATAEEEGEFEEEGEQ.

8 residues coordinate GTP: glutamine 11, glutamate 69, serine 138, glycine 142, threonine 143, glycine 144, asparagine 204, and asparagine 226. Glutamate 69 provides a ligand contact to Mg(2+).

It belongs to the tubulin family. Dimer of alpha and beta chains. A typical microtubule is a hollow water-filled tube with an outer diameter of 25 nm and an inner diameter of 15 nM. Alpha-beta heterodimers associate head-to-tail to form protofilaments running lengthwise along the microtubule wall with the beta-tubulin subunit facing the microtubule plus end conferring a structural polarity. Microtubules usually have 13 protofilaments but different protofilament numbers can be found in some organisms and specialized cells. The cofactor is Mg(2+).

It localises to the cytoplasm. Its subcellular location is the cytoskeleton. Its function is as follows. Tubulin is the major constituent of microtubules, a cylinder consisting of laterally associated linear protofilaments composed of alpha- and beta-tubulin heterodimers. Microtubules grow by the addition of GTP-tubulin dimers to the microtubule end, where a stabilizing cap forms. Below the cap, tubulin dimers are in GDP-bound state, owing to GTPase activity of alpha-tubulin. In Paramecium tetraurelia, this protein is Tubulin beta chain (bPT2).